Consider the following 230-residue polypeptide: MDLKYLNQKEAIDVDQELFTEYKFSVDQLMELAGLSCAHAVAKCFPAEKHPRILVCCGPGNNGGDGLVAARHLSLMGYTPTIYYPKPTAKPLFENLSHQCQMMDICGVKECPSVATAASDYDLILDALFGFSFKPPVRADFVAVVELLQQTKLPIASVDIPSGWDVEKGKLTECDVEPALLISLTAPKLCARHFRGEHHYLGGRFVPPALQRKYGLNLPTYPGNELCVKL.

Residues 11–218 (AIDVDQELFT…ALQRKYGLNL (208 aa)) form the YjeF N-terminal domain. 61–65 (NNGGD) contacts (6S)-NADPHX. K(+) contacts are provided by N62 and D126. (6S)-NADPHX is bound by residues 130 to 136 (GFSFKPP) and D159. S162 is a K(+) binding site.

This sequence belongs to the NnrE/AIBP family. K(+) is required as a cofactor.

The enzyme catalyses (6R)-NADHX = (6S)-NADHX. It catalyses the reaction (6R)-NADPHX = (6S)-NADPHX. Functionally, catalyzes the epimerization of the S- and R-forms of NAD(P)HX, a damaged form of NAD(P)H that is a result of enzymatic or heat-dependent hydration. This is a prerequisite for the S-specific NAD(P)H-hydrate dehydratase to allow the repair of both epimers of NAD(P)HX. The chain is NAD(P)H-hydrate epimerase from Drosophila yakuba (Fruit fly).